The chain runs to 378 residues: Queuine tRNA-ribosyltransferase (378 aa).

The active-site Proton acceptor is Asp-89. Substrate-binding positions include 89 to 93 (DSGGF), Asp-143, Gln-194, and Gly-221. The segment at 252–258 (GVGTPAN) is RNA binding. Catalysis depends on Asp-271, which acts as the Nucleophile. Residues 276 to 280 (ARNGR) form an RNA binding; important for wobble base 34 recognition region. Zn(2+)-binding residues include Cys-309, Cys-311, Cys-314, and His-340.

It belongs to the queuine tRNA-ribosyltransferase family. Homodimer. Within each dimer, one monomer is responsible for RNA recognition and catalysis, while the other monomer binds to the replacement base PreQ1. Zn(2+) is required as a cofactor.

It catalyses the reaction 7-aminomethyl-7-carbaguanine + guanosine(34) in tRNA = 7-aminomethyl-7-carbaguanosine(34) in tRNA + guanine. It participates in tRNA modification; tRNA-queuosine biosynthesis. Its function is as follows. Catalyzes the base-exchange of a guanine (G) residue with the queuine precursor 7-aminomethyl-7-deazaguanine (PreQ1) at position 34 (anticodon wobble position) in tRNAs with GU(N) anticodons (tRNA-Asp, -Asn, -His and -Tyr). Catalysis occurs through a double-displacement mechanism. The nucleophile active site attacks the C1' of nucleotide 34 to detach the guanine base from the RNA, forming a covalent enzyme-RNA intermediate. The proton acceptor active site deprotonates the incoming PreQ1, allowing a nucleophilic attack on the C1' of the ribose to form the product. After dissociation, two additional enzymatic reactions on the tRNA convert PreQ1 to queuine (Q), resulting in the hypermodified nucleoside queuosine (7-(((4,5-cis-dihydroxy-2-cyclopenten-1-yl)amino)methyl)-7-deazaguanosine). This is Queuine tRNA-ribosyltransferase from Lachnoclostridium phytofermentans (strain ATCC 700394 / DSM 18823 / ISDg) (Clostridium phytofermentans).